Consider the following 171-residue polypeptide: MTTRQSSFNYEEILSCGRGELFGPGNAQLPLPPMLMVHRITDISETGGAFDKGYIRAEYDVRPDDWYFPCHFAGNPIMPGCLGLDGMWQLTGFFLGWLGEPGRGMALSTGEVKFKGMVRPDTKLLEYGIDFKRVMRGRLVLGTADGYLKADGEVIYQASDLRVGLSKDKAA.

Residue H71 is part of the active site.

The protein belongs to the thioester dehydratase family. FabA subfamily. In terms of assembly, homodimer.

The protein resides in the cytoplasm. It catalyses the reaction a (3R)-hydroxyacyl-[ACP] = a (2E)-enoyl-[ACP] + H2O. The enzyme catalyses (3R)-hydroxydecanoyl-[ACP] = (2E)-decenoyl-[ACP] + H2O. The catalysed reaction is (2E)-decenoyl-[ACP] = (3Z)-decenoyl-[ACP]. It functions in the pathway lipid metabolism; fatty acid biosynthesis. Its function is as follows. Necessary for the introduction of cis unsaturation into fatty acids. Catalyzes the dehydration of (3R)-3-hydroxydecanoyl-ACP to E-(2)-decenoyl-ACP and then its isomerization to Z-(3)-decenoyl-ACP. Can catalyze the dehydratase reaction for beta-hydroxyacyl-ACPs with saturated chain lengths up to 16:0, being most active on intermediate chain length. This is 3-hydroxydecanoyl-[acyl-carrier-protein] dehydratase from Rhizobium rhizogenes (strain K84 / ATCC BAA-868) (Agrobacterium radiobacter).